The sequence spans 58 residues: Bowman-Birk type wound-induced trypsin inhibitor (58 aa).

7 cysteine pairs are disulfide-bonded: C4-C57, C5-C20, C8-C53, C10-C18, C27-C34, C31-C46, and C36-C44.

It belongs to the Bowman-Birk serine protease inhibitor family.

This chain is Bowman-Birk type wound-induced trypsin inhibitor, found in Medicago sativa (Alfalfa).